The chain runs to 220 residues: Probable N-acetyl-alpha-D-glucosaminyl L-malate deacetylase 2 (220 aa).

Residues H11, D14, and H125 each coordinate Zn(2+).

Belongs to the PIGL family. The cofactor is Zn(2+).

The enzyme catalyses (S)-malyl N-acetyl-alpha-D-glucosaminide + H2O = (S)-malyl alpha-D-glucosaminide + acetate. Its function is as follows. Involved in bacillithiol (BSH) biosynthesis. Catalyzes the second step of the pathway, the deacetylation of N-acetylglucosaminylmalate (GlcNAc-Mal) to glucosamine malate (GlcN-Mal). Has weak activity compared with bshB1. This Bacillus cereus (strain ATCC 14579 / DSM 31 / CCUG 7414 / JCM 2152 / NBRC 15305 / NCIMB 9373 / NCTC 2599 / NRRL B-3711) protein is Probable N-acetyl-alpha-D-glucosaminyl L-malate deacetylase 2.